The chain runs to 446 residues: Ribosomal protein uS12 methylthiotransferase RimO (446 aa).

The MTTase N-terminal domain maps to 6–116; the sequence is PNIGFISLGC…VMQQVHKYVP (111 aa). [4Fe-4S] cluster is bound by residues C15, C51, C80, C148, C152, and C155. Residues 134–375 form the Radical SAM core domain; that stretch reads LTPKHYAYLK…MQLQQEISAA (242 aa). A TRAM domain is found at 378–446; that stretch reads QQKVGKVFTV…AYDLYASLIN (69 aa).

Belongs to the methylthiotransferase family. RimO subfamily. [4Fe-4S] cluster is required as a cofactor.

It localises to the cytoplasm. The enzyme catalyses L-aspartate(89)-[ribosomal protein uS12]-hydrogen + (sulfur carrier)-SH + AH2 + 2 S-adenosyl-L-methionine = 3-methylsulfanyl-L-aspartate(89)-[ribosomal protein uS12]-hydrogen + (sulfur carrier)-H + 5'-deoxyadenosine + L-methionine + A + S-adenosyl-L-homocysteine + 2 H(+). Its function is as follows. Catalyzes the methylthiolation of an aspartic acid residue of ribosomal protein uS12. This chain is Ribosomal protein uS12 methylthiotransferase RimO, found in Pasteurella multocida (strain Pm70).